The sequence spans 235 residues: NAD(P)H-hydrate epimerase (235 aa).

Residues Ala18–Met221 form the YjeF N-terminal domain. (6S)-NADPHX is bound at residue Asn65 to Asp69. Residues Asn66 and Asp127 each contribute to the K(+) site. Residues Gly131–Pro137 and Asp160 contribute to the (6S)-NADPHX site. Residue Ser163 participates in K(+) binding.

This sequence belongs to the NnrE/AIBP family. Requires K(+) as cofactor.

It carries out the reaction (6R)-NADHX = (6S)-NADHX. The enzyme catalyses (6R)-NADPHX = (6S)-NADPHX. Catalyzes the epimerization of the S- and R-forms of NAD(P)HX, a damaged form of NAD(P)H that is a result of enzymatic or heat-dependent hydration. This is a prerequisite for the S-specific NAD(P)H-hydrate dehydratase to allow the repair of both epimers of NAD(P)HX. In Caenorhabditis briggsae, this protein is NAD(P)H-hydrate epimerase.